The sequence spans 328 residues: Probable cell division protein WhiA (328 aa).

The segment at residues 275-308 is a DNA-binding region (H-T-H motif); that stretch reads SLEELGRLAEPPMTKDAVAGRIRRLLSMADKRAE.

Belongs to the WhiA family.

In terms of biological role, involved in cell division and chromosome segregation. The polypeptide is Probable cell division protein WhiA (Corynebacterium jeikeium (strain K411)).